Reading from the N-terminus, the 133-residue chain is UPF0047 protein Rv2556c (133 aa).

Belongs to the UPF0047 family.

The sequence is that of UPF0047 protein Rv2556c from Mycobacterium tuberculosis (strain ATCC 25618 / H37Rv).